Here is a 230-residue protein sequence, read N- to C-terminus: NADH-quinone oxidoreductase subunit 9 (230 aa).

4Fe-4S ferredoxin-type domains are found at residues 60 to 93 and 104 to 133; these read GRPV…MQAK and AWFE…MSKE. Positions 73, 76, 79, 83, 113, 116, 119, and 123 each coordinate [4Fe-4S] cluster.

Belongs to the complex I 23 kDa subunit family. In terms of assembly, NDH-1 is composed of 14 different subunits. Subunits Nqo7-14 constitute the membrane sector of the complex. Requires [4Fe-4S] cluster as cofactor.

The protein localises to the cell inner membrane. The enzyme catalyses a quinone + NADH + 5 H(+)(in) = a quinol + NAD(+) + 4 H(+)(out). Functionally, NDH-1 shuttles electrons from NADH, via FMN and iron-sulfur (Fe-S) centers, to quinones in the respiratory chain. The immediate electron acceptor for the enzyme in this species is believed to be menaquinone. Couples the redox reaction to proton translocation (for every two electrons transferred, four hydrogen ions are translocated across the cytoplasmic membrane), and thus conserves the redox energy in a proton gradient. The polypeptide is NADH-quinone oxidoreductase subunit 9 (nqo9) (Rhodothermus marinus (Rhodothermus obamensis)).